A 545-amino-acid chain; its full sequence is Signal peptide peptidase-like 4 (545 aa).

A signal peptide spans 1 to 25 (MGTSSPEMAAALLLVMAALAGVAAG). The Lumenal portion of the chain corresponds to 26–193 (GDIVHQDDEA…PDRPLVDTAE (168 aa)). 2 N-linked (GlcNAc...) asparagine glycosylation sites follow: asparagine 81 and asparagine 147. The PA domain maps to 90 to 170 (PIDCCDPPTQ…PKDAGNDLQK (81 aa)). The chain crosses the membrane as a helical span at residues 194–214 (VFLWLMAVGTILCASYWSAWS). Residues 215-246 (AREAVIEQEKLLKDGHESSLNLEAGGSSGMVD) lie on the Cytoplasmic side of the membrane. The chain crosses the membrane as a helical span at residues 247-267 (INMTSAILFVVIASCFLIMLY). Residues 268-276 (KLMSHWFVE) lie on the Lumenal side of the membrane. A helical membrane pass occupies residues 277–297 (LLVVIFCIGGVEGLQTCLVAL). Residues 298-317 (LSRWFKPAAESFVKVPFFGA) are Cytoplasmic-facing. Residues 318 to 338 (VSYLTIAVCPFCIVFAVIWAV) traverse the membrane as a helical segment. The Lumenal segment spans residues 339–343 (YRRMT). Residues 344–364 (YAWIGQDILGIALIVTVIQIV) form a helical membrane-spanning segment. Residues 365-373 (RIPNLKVGS) are Cytoplasmic-facing. The chain crosses the membrane as a helical span at residues 374–394 (VLLSCSFLYDIFWVFISKMWF). Residue aspartate 383 is part of the active site. Topologically, residues 395–427 (HESVMIVVARGDKTDEDGVPMLLKIPRMFDPWG) are lumenal. A helical membrane pass occupies residues 428–448 (GFSIIGFGDILLPGLLIAFAL). Aspartate 436 is an active-site residue. The Cytoplasmic segment spans residues 449–460 (RYDWAAKKTLQS). The chain crosses the membrane as a helical span at residues 461–481 (GYFLWSMVAYGSGLMITYVAL). At 482–485 (NLMD) the chain is on the lumenal side. The chain crosses the membrane as a helical span at residues 486–506 (GHGQPALLYIVPFTLGTFIAL). The PAL signature appears at 490–492 (PAL). Residues 507-545 (GRKRGELRNLWTRGQPERVCTHMHMQPSPKDTNCDAVSS) are Cytoplasmic-facing.

It belongs to the peptidase A22B family. Glycosylated.

Its subcellular location is the endosome membrane. Functionally, intramembrane-cleaving aspartic protease (I-CLiP) that cleaves type II membrane signal peptides in the hydrophobic plane of the membrane. The chain is Signal peptide peptidase-like 4 (SPPL4) from Oryza sativa subsp. japonica (Rice).